A 324-amino-acid polypeptide reads, in one-letter code: Biotin synthase (324 aa).

Residues 37–264 (NEVQVAALMN…ASYVRLAAGR (228 aa)) enclose the Radical SAM core domain. [4Fe-4S] cluster is bound by residues Cys-52, Cys-56, and Cys-59. Positions 96, 127, 187, and 259 each coordinate [2Fe-2S] cluster.

It belongs to the radical SAM superfamily. Biotin synthase family. As to quaternary structure, homodimer. The cofactor is [4Fe-4S] cluster. It depends on [2Fe-2S] cluster as a cofactor.

The catalysed reaction is (4R,5S)-dethiobiotin + (sulfur carrier)-SH + 2 reduced [2Fe-2S]-[ferredoxin] + 2 S-adenosyl-L-methionine = (sulfur carrier)-H + biotin + 2 5'-deoxyadenosine + 2 L-methionine + 2 oxidized [2Fe-2S]-[ferredoxin]. The protein operates within cofactor biosynthesis; biotin biosynthesis; biotin from 7,8-diaminononanoate: step 2/2. Catalyzes the conversion of dethiobiotin (DTB) to biotin by the insertion of a sulfur atom into dethiobiotin via a radical-based mechanism. This is Biotin synthase from Anaplasma marginale (strain Florida).